We begin with the raw amino-acid sequence, 316 residues long: Probable thioesterase lcsE (316 aa).

It belongs to the AMT4 thioesterase family.

The protein operates within secondary metabolite biosynthesis. Its function is as follows. Probable thioesterase; part of the gene cluster that mediates the biosynthesis of the lipopeptide antibiotics leucinostatins that show extensive biological activities, including antimalarial, antiviral, antibacterial, antifungal, and antitumor activities, as well as phytotoxic. Leucinostatin A contains nine amino acid residues, including the unusual amino acid 4-methyl-L-proline (MePro), 2-amino-6-hydroxy-4-methyl-8-oxodecanoic acid (AHyMeOA), 3-hydroxyleucine (HyLeu), alpha-aminoisobutyric acid (AIB), beta-Ala, a 4-methylhex-2-enoic acid at the N-terminus as well as a N1,N1-dimethylpropane-1,2-diamine (DPD) at the C-terminus. The biosynthesis of leucinostatins is probably initiated with the assembly of 4-methylhex-2-enoic acid by a reducing PKS. Two reducing polyketide synthases, lcsB and lcsC, have been identified in the cluster and it is not clear which is the one that assembles 4-methylhex-2-enoic acid since both contain KS, AT, DH, cMT, ER, KR and ACP domains. The polyketide residue might be transferred to the NRPS lcsA, mediated by two additional enzymes, the acyl-CoA ligase lcsD and the thioesterase lcsE. The linear polyketide carboxylic acid, which is released from PKS, is converted to a CoA thioester by lcsD, and then lcsE hydrolyzes the thiol bond and shuttles the polyketide intermediate to lcsA. The C domain of the first module catalyzed the condensation of 4-methylhex-2-enoic acid and MePro carried by domain A1, followed by successive condensations of nine amino acids to trigger the elongation of the linear peptide. A5 and A6 domains of lcsA are proposed to incorporate leucine, A2 AHyMeOA, and A3 incorporates HyLeu. A4, A7 and A8 incorporate AIB. The AHyMeOA in leucinostatin A activated by the A2 might be produced by the second PKS (lcsB or lcsC) present within the cluster. The MePro is probably produced via leucine cyclization and may originate from a separate pathway, independent of the cluster. Another nonproteinogenic amino acid, beta-Ala, could be produced by an aspartic acid decarboxylase also localized outside of the cluster. Two candidates are VFPBJ_01400 and VFPBJ_10476. The final peptide scaffold may be released by the NAD(P)H-dependent thioester reductase (TE) at the C-terminal region of lcsA. Transamination of the lcsA product by the transaminase lcsP may produce DPD at the C-terminus. Further hydroxylation steps performed alternatively by the cytochrome P450 monooxygenases lcsI, lcsK and lcsN then yield the non-methylated leucinostatins precursor. It is also possible that leucines can be hydroxylated prior to their incorporation into the peptide. Varying extents of methylation then lead to the formation of leucinostatins A and B. This is Probable thioesterase lcsE from Purpureocillium lilacinum (Paecilomyces lilacinus).